The sequence spans 603 residues: Probable methyltransferase-like protein 25 (603 aa).

The interval threonine 326–glutamate 352 is disordered.

Functionally, probable methyltransferase. This chain is Probable methyltransferase-like protein 25 (METTL25), found in Homo sapiens (Human).